The primary structure comprises 347 residues: GMP reductase (347 aa).

108–131 serves as a coordination point for NADP(+); that stretch reads TDFEKTKQILIANPALNFLCIDVA. K(+) is bound by residues Gly-181 and Gly-183. Cys-186 acts as the Thioimidate intermediate in catalysis. Residue 216–239 participates in NADP(+) binding; that stretch reads IISDGGCTMPGDVAKAFGGGADFV.

The protein belongs to the IMPDH/GMPR family. GuaC type 1 subfamily. Homotetramer.

The enzyme catalyses IMP + NH4(+) + NADP(+) = GMP + NADPH + 2 H(+). Its function is as follows. Catalyzes the irreversible NADPH-dependent deamination of GMP to IMP. It functions in the conversion of nucleobase, nucleoside and nucleotide derivatives of G to A nucleotides, and in maintaining the intracellular balance of A and G nucleotides. The polypeptide is GMP reductase (Enterobacter sp. (strain 638)).